Consider the following 40-residue polypeptide: Photosystem II reaction center protein J (40 aa).

Residues 8 to 28 traverse the membrane as a helical segment; sequence IPLWIIGTVAGILVIGLVGVF.

This sequence belongs to the PsbJ family. PSII is composed of 1 copy each of membrane proteins PsbA, PsbB, PsbC, PsbD, PsbE, PsbF, PsbH, PsbI, PsbJ, PsbK, PsbL, PsbM, PsbT, PsbX, PsbY, PsbZ, Psb30/Ycf12, at least 3 peripheral proteins of the oxygen-evolving complex and a large number of cofactors. It forms dimeric complexes.

It is found in the plastid. Its subcellular location is the chloroplast thylakoid membrane. One of the components of the core complex of photosystem II (PSII). PSII is a light-driven water:plastoquinone oxidoreductase that uses light energy to abstract electrons from H(2)O, generating O(2) and a proton gradient subsequently used for ATP formation. It consists of a core antenna complex that captures photons, and an electron transfer chain that converts photonic excitation into a charge separation. In Helianthus annuus (Common sunflower), this protein is Photosystem II reaction center protein J.